A 129-amino-acid chain; its full sequence is F(420)H(2) dehydrogenase subunit A (129 aa).

3 consecutive transmembrane segments (helical) span residues 9–29, 64–84, and 95–115; these read IIDS…MPPM, FNVE…EVLF, and HGIT…LLFG.

The protein belongs to the complex I subunit 3 family. The FPO complex is composed of at least 13 different subunits. FpoA, FpoH, FpoJ, FpoK, FpoL, FpoM and FpoN proteins constitute the membrane sector of the complex.

It is found in the cell membrane. It carries out the reaction methanophenazine + reduced coenzyme F420-(gamma-L-Glu)(n) = dihydromethanophenazine + oxidized coenzyme F420-(gamma-L-Glu)(n) + H(+). Component of the F(420)H(2) dehydrogenase (FPO complex) which is part of the energy-conserving F(420)H(2):heterodisulfide oxidoreductase system. The membrane-bound electron transfer system of the complex plays an important role in the metabolism of methylotrophic methanogens when the organisms grow on methanol or methylamines. Catalyzes the oxidation of methanophenazine to dihydromethanophenazine. It shuttles electrons from F(420)H(2), via FAD and iron-sulfur (Fe-S) centers, to methanophenazine (an electron carrier in the membrane). It couples the redox reaction to proton translocation (for every two electrons transferred, two hydrogen ions are translocated across the cytoplasmic membrane), and thus conserves the redox energy in a proton gradient. It also catalyzes the oxidation of F(420)H(2) with quinones such as 2,3-dimethyl-1,4-naphthoquinone, 2-methyl-1,4-naphthoquinone and tetramethyl-p-benzoquinone. The chain is F(420)H(2) dehydrogenase subunit A (fpoA) from Methanosarcina mazei (strain ATCC BAA-159 / DSM 3647 / Goe1 / Go1 / JCM 11833 / OCM 88) (Methanosarcina frisia).